We begin with the raw amino-acid sequence, 315 residues long: Melanoma-associated antigen 9 (315 aa).

Residues Met-1–Asp-13 are compositionally biased toward basic and acidic residues. The interval Met-1 to Ser-67 is disordered. Residues Ser-50–Ser-67 are compositionally biased toward low complexity. Residues Leu-108–Val-307 enclose the MAGE domain.

In terms of tissue distribution, expressed in many tumors of several types, such as melanoma, head and neck squamous cell carcinoma, lung carcinoma and breast carcinoma, but not in normal tissues except for testes and placenta.

Not known, though may play a role in embryonal development and tumor transformation or aspects of tumor progression. The chain is Melanoma-associated antigen 9 (MAGEA9) from Homo sapiens (Human).